Reading from the N-terminus, the 1013-residue chain is Retinoblastoma-related protein 1 (1013 aa).

The interval 406 to 607 (TPVSTAMTTA…EKGSSMYNSL (202 aa)) is domain A. The segment at 406 to 858 (TPVSTAMTTA…NEIFIPAVKP (453 aa)) is pocket. Residues 608 to 727 (IVARPSLALE…PGGGGETCAE (120 aa)) are spacer. The tract at residues 728–858 (TGINIFFTKI…NEIFIPAVKP (131 aa)) is domain B. Phosphoserine occurs at positions 885 and 898. A disordered region spans residues 979 to 1013 (VANSLNLQNQNQNQNGSDASSSGGAAPLKTEPTDS). Residues 980–1004 (ANSLNLQNQNQNQNGSDASSSGGAA) are compositionally biased toward low complexity.

The protein belongs to the retinoblastoma protein (RB) family. Interacts with the begomovirus replication-associated protein (Rep), the nanovirus Clink protein, the mastrevirus RepA protein, E2FA, E2FB and E2FC. Interacts with MSI1 through its Domain A. Interacts with ATPK1/S6K1. Interacts with SCR. Interacts with HAT2. Interacts with FAMA. Interacts with MYB124 and MYB88. Component of a DREAM-like complex which modulates a variety of developmentally regulated genes and of the mitotic genes in proliferating and differentiated cells. Associates with MYB3R3 in both earlier and later stages of leaves development. Interacts with MYB3R4 only at early stages of leaves development. In terms of processing, highly phosphorylated by CDKA-1 during G1 to S phase transition. Once hyper-phosphorylated, becomes inactive and unable to interact with E2F. Post-translationally, ubiquitinated. Subject to proteasome-dependent degradation during sucrose starvation. As to expression, expressed in actively dividing cells. Detected in the shoot apical meristem, in young leaf primordia and in both sporophytic tissue and the megagametophyte.

The protein resides in the nucleus. In terms of biological role, key regulator of entry into cell division. Acts as a transcription repressor of E2F target genes, whose activity is required for progress from the G1 to the S phase of the cell cycle. Hyperphosphorylation by CDKA-1 prevents the binding to E2F transcription factors, allowing G1 to S phase transition to operate. Forms a stable complex with E2FA that functions in maintaining cell proliferation through repression of cell differentiation. Plays a central role in the mechanism controlling meristem cell differentiation, cell fate establishment and cell fate maintenance during organogenesis and gametogenesis. Required during lateral organ production. Also involved in controlling asymmetric divisions of stem cells in different stem cell niches. Acts as a negative regulator of cell proliferation during leaf and gametophytes development. At later stages of development, restricts the progression through additional endocycles. In the leaf, plays a role in the control of the mesophyll differentiation. Another role is its implication in the regulation of imprinted genes. Acts together with MSI1 to repress the expression of MET1 during gametogenesis. This in turn activates expression of the imprinted genes FIS2 and FWA. Regulates many genes of the polycomb repressive complex 2 (PRC2). Plays an important role in meiosis affecting different aspects of this complex process. Functions as a positive regulator of the developmental switch from embryonic heterotrophic growth to autotrophic growth. Interaction with mastrevirus RepA or nanovirus Clink protein disrupts the RBR/E2F interaction and releases the transcription of replicative enzymes needed by the virus by increasing the E2F DNA-binding activity. The polypeptide is Retinoblastoma-related protein 1 (RBR1) (Arabidopsis thaliana (Mouse-ear cress)).